Reading from the N-terminus, the 358-residue chain is 3-dehydroquinate synthase (358 aa).

Residues 70–75 (DGEQFK), 104–108 (GVIGD), 128–129 (TT), Lys141, Lys150, and 168–171 (CLHT) contribute to the NAD(+) site. Zn(2+) contacts are provided by Glu183, His246, and His263.

Belongs to the sugar phosphate cyclases superfamily. Dehydroquinate synthase family. Co(2+) serves as cofactor. The cofactor is Zn(2+). NAD(+) is required as a cofactor.

The protein localises to the cytoplasm. It catalyses the reaction 7-phospho-2-dehydro-3-deoxy-D-arabino-heptonate = 3-dehydroquinate + phosphate. Its pathway is metabolic intermediate biosynthesis; chorismate biosynthesis; chorismate from D-erythrose 4-phosphate and phosphoenolpyruvate: step 2/7. Catalyzes the conversion of 3-deoxy-D-arabino-heptulosonate 7-phosphate (DAHP) to dehydroquinate (DHQ). This chain is 3-dehydroquinate synthase, found in Shewanella baltica (strain OS155 / ATCC BAA-1091).